We begin with the raw amino-acid sequence, 251 residues long: MTIQLINESSNTAKFQQICEKWQLVHDKSASLALVLTDTRLELRKLDEAKLGAIAVNFVDGTLAHRRKFGGGRGEAIAKAVGIKGNYLPSVIDATAGLGRDAFVLAAIGCKVTLVERHPVIAALLEDGLTRAYLDAEIGEFMQQRMQLANVHNIAQLDTTTQSADVVYLDPMYPHKQKSALVKKEMRVFQHLVGADLDADQFLLPAKALATKRVVVKRPDYAPPLAEQHPSFSQKTKNHRFDIYLSPLQKR.

S-adenosyl-L-methionine is bound by residues 100-101 (RD), 116-117 (ER), and Asp170.

The protein belongs to the methyltransferase superfamily. RsmJ family.

The protein localises to the cytoplasm. It catalyses the reaction guanosine(1516) in 16S rRNA + S-adenosyl-L-methionine = N(2)-methylguanosine(1516) in 16S rRNA + S-adenosyl-L-homocysteine + H(+). Its function is as follows. Specifically methylates the guanosine in position 1516 of 16S rRNA. The polypeptide is Ribosomal RNA small subunit methyltransferase J (Haemophilus ducreyi (strain 35000HP / ATCC 700724)).